The sequence spans 62 residues: Disintegrin atropoimin (62 aa).

The Disintegrin domain maps to 1-62 (EAGEECDCGT…ADCPRNGLYG (62 aa)). Cystine bridges form between Cys-6–Cys-21, Cys-8–Cys-16, Cys-15–Cys-38, Cys-29–Cys-35, and Cys-34–Cys-48. The Cell attachment site signature appears at 41–42 (GD).

Belongs to the venom metalloproteinase (M12B) family. P-II subfamily. P-IIa sub-subfamily. In terms of assembly, monomer. Expressed by the venom gland.

It is found in the secreted. Functionally, inhibits ADP- (IC(50)=63 nM) and collagen-induced (IC(50)=53 nM) aggregation of human platelets. In vitro, inhibits adhesion of endothelial cells to vitronectin, type-I collagen and, to a lower degree, fibronectin and laminin. This is Disintegrin atropoimin from Metlapilcoatlus mexicanus (Central American jumping pitviper).